A 126-amino-acid polypeptide reads, in one-letter code: Small ribosomal subunit protein uS12c (126 aa).

It belongs to the universal ribosomal protein uS12 family. As to quaternary structure, part of the 30S ribosomal subunit.

The protein resides in the plastid. It localises to the chloroplast. With S4 and S5 plays an important role in translational accuracy. Located at the interface of the 30S and 50S subunits. This Trieres chinensis (Marine centric diatom) protein is Small ribosomal subunit protein uS12c (rps12).